Consider the following 256-residue polypeptide: Protein FixA (256 aa).

Belongs to the ETF beta-subunit/FixA family. In terms of assembly, heterodimer of FixA and FixB.

It participates in amine and polyamine metabolism; carnitine metabolism. Its function is as follows. Required for anaerobic carnitine reduction. May bring reductant to CaiA. This Escherichia coli O81 (strain ED1a) protein is Protein FixA.